The sequence spans 222 residues: Probable GTP-binding protein EngB (222 aa).

One can recognise an EngB-type G domain in the interval 27–202; sequence TGIEVAFAGR…AKKLDEWFLG (176 aa). GTP is bound by residues 35–42, 61–65, 81–84, 148–151, and 181–183; these read GRSNAGKS, GRTQL, DLPG, TKAD, and FSS. Residues Ser-42 and Thr-63 each contribute to the Mg(2+) site.

This sequence belongs to the TRAFAC class TrmE-Era-EngA-EngB-Septin-like GTPase superfamily. EngB GTPase family. Requires Mg(2+) as cofactor.

Functionally, necessary for normal cell division and for the maintenance of normal septation. The sequence is that of Probable GTP-binding protein EngB from Pseudoalteromonas translucida (strain TAC 125).